The following is a 545-amino-acid chain: B3 domain-containing protein Os03g0620500 (545 aa).

The TF-B3 1 DNA-binding region spans 26–119 (MKCFHRQMSA…RRASGVQERN (94 aa)). Positions 111–188 (RASGVQERNA…SSSEHESSYD (78 aa)) are disordered. The segment covering 173 to 186 (EEAKESSSSEHESS) has biased composition (basic and acidic residues). Positions 231–331 (VTTMKHSNVN…RATVHLLRET (101 aa)) form a DNA-binding region, TF-B3 2. The interval 368–400 (RRGTMEPSTTNVKKEADNEQCNNGQGKRQEPLN) is disordered. Residues 441 to 542 (YVSIMNKSNV…AMKVHIIRHN (102 aa)) constitute a DNA-binding region (TF-B3 3).

It is found in the nucleus. This Oryza sativa subsp. japonica (Rice) protein is B3 domain-containing protein Os03g0620500.